A 241-amino-acid chain; its full sequence is MAGHSKWANIKHKKAAADAKRGKIWTRLIKEITVAAKLGGGDPDSNPRLRLSMDKAMDANMPKDNIQRAIQRGVGGLEGVNYEEIRYEGYGLSGAAIIVDCLTDNRTRTVAEVRHAFSKHGGNMGTEGSVAFMFTHCGQFLFAPGTPEDKLMDAALEAGADDVVTNEDGSIEVTCPPNDFSAVKAALEAAGFKAEVADVVMKPQNEVDFTGDDAVKMQKLLDALENLDDVQEVFTNAVIEE.

This sequence belongs to the TACO1 family.

Its subcellular location is the cytoplasm. The sequence is that of Probable transcriptional regulatory protein Reut_A2522 from Cupriavidus pinatubonensis (strain JMP 134 / LMG 1197) (Cupriavidus necator (strain JMP 134)).